The primary structure comprises 420 residues: Glucose-1-phosphate adenylyltransferase (420 aa).

Alpha-D-glucose 1-phosphate is bound by residues tyrosine 107, glycine 173, 188–189 (EK), and serine 206.

It belongs to the bacterial/plant glucose-1-phosphate adenylyltransferase family. In terms of assembly, homotetramer.

The enzyme catalyses alpha-D-glucose 1-phosphate + ATP + H(+) = ADP-alpha-D-glucose + diphosphate. It participates in glycan biosynthesis; glycogen biosynthesis. Functionally, involved in the biosynthesis of ADP-glucose, a building block required for the elongation reactions to produce glycogen. Catalyzes the reaction between ATP and alpha-D-glucose 1-phosphate (G1P) to produce pyrophosphate and ADP-Glc. This is Glucose-1-phosphate adenylyltransferase from Shewanella sp. (strain W3-18-1).